A 213-amino-acid polypeptide reads, in one-letter code: Probable GTP-binding protein EngB (213 aa).

The EngB-type G domain occupies Glu30–Leu204. GTP contacts are provided by residues Gly38–Ser45, Gly64–Leu68, Asp82–Gly85, Thr149–Asp152, and Leu182–Ala185. Positions 45 and 66 each coordinate Mg(2+).

This sequence belongs to the TRAFAC class TrmE-Era-EngA-EngB-Septin-like GTPase superfamily. EngB GTPase family. Mg(2+) serves as cofactor.

Functionally, necessary for normal cell division and for the maintenance of normal septation. The protein is Probable GTP-binding protein EngB of Pseudomonas fluorescens (strain SBW25).